The following is a 469-amino-acid chain: 3-isopropylmalate dehydratase large subunit (469 aa).

Cysteine 347, cysteine 410, and cysteine 413 together coordinate [4Fe-4S] cluster.

It belongs to the aconitase/IPM isomerase family. LeuC type 1 subfamily. As to quaternary structure, heterodimer of LeuC and LeuD. Requires [4Fe-4S] cluster as cofactor.

The enzyme catalyses (2R,3S)-3-isopropylmalate = (2S)-2-isopropylmalate. The protein operates within amino-acid biosynthesis; L-leucine biosynthesis; L-leucine from 3-methyl-2-oxobutanoate: step 2/4. Functionally, catalyzes the isomerization between 2-isopropylmalate and 3-isopropylmalate, via the formation of 2-isopropylmaleate. The chain is 3-isopropylmalate dehydratase large subunit from Burkholderia ambifaria (strain MC40-6).